The chain runs to 191 residues: Probable calcium-binding protein CML8 (191 aa).

The disordered stretch occupies residues 1 to 41; it reads MASKYRGYYHDEASSAAGGGGGGGGGDGYRREKQVRKKRLT. The span at 17 to 27 shows a compositional bias: gly residues; it reads AGGGGGGGGGD. EF-hand domains follow at residues 43–78, 79–114, 116–151, and 152–187; these read QKRK…LGFE, MTPE…KMGE, DARE…TGEP, and FTLD…IGFG. D56, D58, S60, T62, E67, D92, D94, S96, T98, E103, D129, D131, N133, K135, D140, D165, N167, D169, E171, and E176 together coordinate Ca(2+).

Its function is as follows. Potential calcium sensor. The sequence is that of Probable calcium-binding protein CML8 (CML8) from Oryza sativa subsp. japonica (Rice).